Consider the following 933-residue polypeptide: Isoleucine--tRNA ligase (933 aa).

Positions P57 to H67 match the 'HIGH' region motif. E554 provides a ligand contact to L-isoleucyl-5'-AMP. Positions K595–S599 match the 'KMSKS' region motif. K598 contacts ATP.

This sequence belongs to the class-I aminoacyl-tRNA synthetase family. IleS type 1 subfamily. As to quaternary structure, monomer.

It localises to the cytoplasm. It catalyses the reaction tRNA(Ile) + L-isoleucine + ATP = L-isoleucyl-tRNA(Ile) + AMP + diphosphate. Catalyzes the attachment of isoleucine to tRNA(Ile). As IleRS can inadvertently accommodate and process structurally similar amino acids such as valine, to avoid such errors it has two additional distinct tRNA(Ile)-dependent editing activities. One activity is designated as 'pretransfer' editing and involves the hydrolysis of activated Val-AMP. The other activity is designated 'posttransfer' editing and involves deacylation of mischarged Val-tRNA(Ile). The polypeptide is Isoleucine--tRNA ligase (Streptococcus pyogenes serotype M18 (strain MGAS8232)).